Reading from the N-terminus, the 326-residue chain is Beta-ketoacyl-[acyl-carrier-protein] synthase III (326 aa).

Residues cysteine 120 and histidine 253 contribute to the active site. The segment at 254–258 (QANIR) is ACP-binding. Asparagine 283 is a catalytic residue.

The protein belongs to the thiolase-like superfamily. FabH family. As to quaternary structure, homodimer.

It is found in the cytoplasm. The catalysed reaction is malonyl-[ACP] + acetyl-CoA + H(+) = 3-oxobutanoyl-[ACP] + CO2 + CoA. Its pathway is lipid metabolism; fatty acid biosynthesis. In terms of biological role, catalyzes the condensation reaction of fatty acid synthesis by the addition to an acyl acceptor of two carbons from malonyl-ACP. Catalyzes the first condensation reaction which initiates fatty acid synthesis and may therefore play a role in governing the total rate of fatty acid production. Possesses both acetoacetyl-ACP synthase and acetyl transacylase activities. Its substrate specificity determines the biosynthesis of branched-chain and/or straight-chain of fatty acids. In Cupriavidus necator (strain ATCC 17699 / DSM 428 / KCTC 22496 / NCIMB 10442 / H16 / Stanier 337) (Ralstonia eutropha), this protein is Beta-ketoacyl-[acyl-carrier-protein] synthase III.